Here is a 222-residue protein sequence, read N- to C-terminus: Octanoyltransferase (222 aa).

Residues 34–214 (AEAPSTVLLL…EFRKHEEALV (181 aa)) form the BPL/LPL catalytic domain. Substrate is bound by residues 72–79 (RGGKLTWH), 144–146 (AIG), and 157–159 (GIA). The Acyl-thioester intermediate role is filled by cysteine 175.

The protein belongs to the LipB family.

The protein resides in the cytoplasm. The catalysed reaction is octanoyl-[ACP] + L-lysyl-[protein] = N(6)-octanoyl-L-lysyl-[protein] + holo-[ACP] + H(+). It functions in the pathway protein modification; protein lipoylation via endogenous pathway; protein N(6)-(lipoyl)lysine from octanoyl-[acyl-carrier-protein]: step 1/2. In terms of biological role, catalyzes the transfer of endogenously produced octanoic acid from octanoyl-acyl-carrier-protein onto the lipoyl domains of lipoate-dependent enzymes. Lipoyl-ACP can also act as a substrate although octanoyl-ACP is likely to be the physiological substrate. The protein is Octanoyltransferase of Arthrobacter sp. (strain FB24).